We begin with the raw amino-acid sequence, 338 residues long: Phenylalanine--tRNA ligase alpha subunit (338 aa).

Glu-252 lines the Mg(2+) pocket.

This sequence belongs to the class-II aminoacyl-tRNA synthetase family. Phe-tRNA synthetase alpha subunit type 1 subfamily. As to quaternary structure, tetramer of two alpha and two beta subunits. It depends on Mg(2+) as a cofactor.

Its subcellular location is the cytoplasm. The catalysed reaction is tRNA(Phe) + L-phenylalanine + ATP = L-phenylalanyl-tRNA(Phe) + AMP + diphosphate + H(+). The sequence is that of Phenylalanine--tRNA ligase alpha subunit from Fusobacterium nucleatum subsp. nucleatum (strain ATCC 25586 / DSM 15643 / BCRC 10681 / CIP 101130 / JCM 8532 / KCTC 2640 / LMG 13131 / VPI 4355).